Consider the following 396-residue polypeptide: Probable arginine kinase F46H5.3 (396 aa).

A Phosphagen kinase N-terminal domain is found at 47 to 129 (KIEEGYAKLQ…FDPLIQDYHN (83 aa)). 102-106 (GVGVY) is a binding site for substrate. Residues 159–396 (FINSTRIRCG…AHLIALEKAA (238 aa)) enclose the Phosphagen kinase C-terminal domain. Residues 162-166 (STRIR) and His-226 each bind ATP. Glu-266 contacts substrate. Position 270 (Arg-270) interacts with ATP. Cys-312 is a binding site for substrate. ATP-binding positions include 321–325 (RASVH), 349–354 (RGIHGE), and Asp-364. Glu-354 serves as a coordination point for substrate.

This sequence belongs to the ATP:guanido phosphotransferase family.

The enzyme catalyses L-arginine + ATP = N(omega)-phospho-L-arginine + ADP + H(+). The protein is Probable arginine kinase F46H5.3 of Caenorhabditis elegans.